We begin with the raw amino-acid sequence, 184 residues long: Elongation factor P (184 aa).

It belongs to the elongation factor P family.

The protein resides in the cytoplasm. Its pathway is protein biosynthesis; polypeptide chain elongation. Functionally, involved in peptide bond synthesis. Stimulates efficient translation and peptide-bond synthesis on native or reconstituted 70S ribosomes in vitro. Probably functions indirectly by altering the affinity of the ribosome for aminoacyl-tRNA, thus increasing their reactivity as acceptors for peptidyl transferase. The polypeptide is Elongation factor P (Leptothrix cholodnii (strain ATCC 51168 / LMG 8142 / SP-6) (Leptothrix discophora (strain SP-6))).